Here is a 66-residue protein sequence, read N- to C-terminus: MLARTCSFCGKTIEPGTGIMYVRKDGAILYFCSNKCKKNMIGLNRVPRYVRWTNEYHELKKMRTRS.

Positions 6, 9, 32, and 36 each coordinate Zn(2+). Residues 6–36 (CSFCGKTIEPGTGIMYVRKDGAILYFCSNKC) form a C4-type zinc finger.

This sequence belongs to the eukaryotic ribosomal protein eL24 family. In terms of assembly, part of the 50S ribosomal subunit. Forms a cluster with proteins L3 and L14. The cofactor is Zn(2+).

Binds to the 23S rRNA. This is Large ribosomal subunit protein eL24 from Thermoplasma volcanium (strain ATCC 51530 / DSM 4299 / JCM 9571 / NBRC 15438 / GSS1).